A 466-amino-acid chain; its full sequence is Argininosuccinate lyase (466 aa).

This sequence belongs to the lyase 1 family. Argininosuccinate lyase subfamily.

The protein resides in the cytoplasm. It catalyses the reaction 2-(N(omega)-L-arginino)succinate = fumarate + L-arginine. It participates in amino-acid biosynthesis; L-arginine biosynthesis; L-arginine from L-ornithine and carbamoyl phosphate: step 3/3. In Bartonella tribocorum (strain CIP 105476 / IBS 506), this protein is Argininosuccinate lyase.